Consider the following 741-residue polypeptide: Wall-associated receptor kinase 3 (741 aa).

The first 23 residues, 1 to 23 (MKFQEGVFLVVIFFLAYTQLVKG), serve as a signal peptide directing secretion. Over 24–342 (QHQPREDCKL…CTRPEYKRTR (319 aa)) the chain is Extracellular. 12 N-linked (GlcNAc...) asparagine glycosylation sites follow: N37, N59, N78, N100, N103, N141, N192, N199, N232, N246, N261, and N266. Residues 245-292 (GNQTCEQAGSTRICGKNSSCYNSTTRNGYICKCNEGYDGNPYRSEGCK) form the EGF-like 1 domain. Cystine bridges form between C249/C264, C258/C275, C277/C291, C297/C310, C304/C319, and C321/C333. An EGF-like 2; calcium-binding domain is found at 293–334 (DIDECISDTHNCSDPKTCRNRDGGFDCKCPSGYDLNSSMSCT). Residue N303 is glycosylated (N-linked (GlcNAc...) asparagine). N328 carries N-linked (GlcNAc...) asparagine glycosylation. The helical transmembrane segment at 343-363 (IFLVIIIGVLVLLLAAICIQH) threads the bilayer. At 364 to 741 (ATKQRKYTKL…VAILDIETGR (378 aa)) the chain is on the cytoplasmic side. Phosphothreonine is present on T404. The Protein kinase domain maps to 415-698 (YDESRILGQG…RVEKTKHKWS (284 aa)). ATP contacts are provided by residues 421 to 429 (LGQGGQGTV) and K443. A Phosphotyrosine modification is found at Y488. The active-site Proton acceptor is D540. Phosphothreonine is present on residues T574 and T579. Y587 is modified (phosphotyrosine).

It belongs to the protein kinase superfamily. Ser/Thr protein kinase family. As to expression, predominantly expressed in green tissues such as stems and leaves.

It localises to the membrane. It catalyses the reaction L-seryl-[protein] + ATP = O-phospho-L-seryl-[protein] + ADP + H(+). The enzyme catalyses L-threonyl-[protein] + ATP = O-phospho-L-threonyl-[protein] + ADP + H(+). In terms of biological role, serine/threonine-protein kinase that may function as a signaling receptor of extracellular matrix component. Binding to pectin may have significance in the control of cell expansion, morphogenesis and development. This is Wall-associated receptor kinase 3 (WAK3) from Arabidopsis thaliana (Mouse-ear cress).